A 122-amino-acid polypeptide reads, in one-letter code: Large ribosomal subunit protein uL18 (122 aa).

Belongs to the universal ribosomal protein uL18 family. As to quaternary structure, part of the 50S ribosomal subunit; part of the 5S rRNA/L5/L18/L25 subcomplex. Contacts the 5S and 23S rRNAs.

In terms of biological role, this is one of the proteins that bind and probably mediate the attachment of the 5S RNA into the large ribosomal subunit, where it forms part of the central protuberance. The protein is Large ribosomal subunit protein uL18 of Heliobacterium modesticaldum (strain ATCC 51547 / Ice1).